We begin with the raw amino-acid sequence, 363 residues long: Chemerin-like receptor 1 (363 aa).

The Extracellular segment spans residues 1–39 (MDFEDYNSTYEDSYTDDFDTIVALEEFSPLEGRVVRIFL). The N-linked (GlcNAc...) asparagine glycan is linked to asparagine 7. The helical transmembrane segment at 40-60 (VVVYSIICFLGILGNGLVIVI) threads the bilayer. Topologically, residues 61–71 (ATFKMKKTVNT) are cytoplasmic. The chain crosses the membrane as a helical span at residues 72 to 92 (VWFLNLAVADFLFNVFLPIHI). Residues 93–109 (AYAAMDYHWVFGTAMCK) lie on the Extracellular side of the membrane. Cysteine 108 and cysteine 185 are disulfide-bonded. Residues 110 to 130 (ISNFLLIHNMYTSVFLLTVIS) traverse the membrane as a helical segment. Over 131-152 (FDRCISVLLPVWSQNHRSIRLA) the chain is Cytoplasmic. A helical membrane pass occupies residues 153 to 173 (YMACVVIWVLAFFLSSPSLVF). Topologically, residues 174 to 220 (RDTAHLHGKISCFNNFSLSATSSSSWPTHPQMDTVGFGRQMVVTITR) are extracellular. Asparagine 188 carries N-linked (GlcNAc...) asparagine glycosylation. Residues 221–241 (FLCGFLVPVLIISACYFTIVY) traverse the membrane as a helical segment. Residues 242-256 (KLRRNRLAKTKKPFK) lie on the Cytoplasmic side of the membrane. A helical transmembrane segment spans residues 257–277 (IIVTIIITFFLCWCPYHTLYL). Over 278 to 283 (LELHHR) the chain is Extracellular. A helical transmembrane segment spans residues 284–304 (AMPGSVFSLGVPLATAIAIAN). The Cytoplasmic portion of the chain corresponds to 305-363 (SCMNPILYVFMGQDFKKFKVALFSRLVNALSEDTGHSSYPSHRSFTKMSSMNERETSML). Phosphoserine is present on serine 335. A disordered region spans residues 337–363 (DTGHSSYPSHRSFTKMSSMNERETSML). Threonine 338 is subject to Phosphothreonine. Over residues 340-355 (HSSYPSHRSFTKMSSM) the composition is skewed to polar residues. Phosphoserine occurs at positions 345, 348, and 354.

This sequence belongs to the chemokine-like receptor (CMKLR) family. As to expression, predominantly expressed in spleen and temperately in adipose tissue.

Its subcellular location is the cell membrane. Functionally, receptor for the chemoattractant adipokine chemerin/RARRES2 and for the omega-3 fatty acid derived molecule resolvin E1. Interaction with RARRES2 initiates activation of G proteins G(i)/G(o) and beta-arrestin pathways inducing cellular responses via second messenger pathways such as intracellular calcium mobilization, phosphorylation of MAP kinases MAPK1/MAPK3 (ERK1/2), TYRO3, MAPK14/P38MAPK and PI3K leading to multifunctional effects, like, reduction of immune responses, enhancing of adipogenesis and angionesis. Resolvin E1 down-regulates cytokine production in macrophages by reducing the activation of MAPK1/3 (ERK1/2) and NF-kappa-B. Positively regulates adipogenesis and adipocyte metabolism. The chain is Chemerin-like receptor 1 (CMLKR1) from Sus scrofa (Pig).